The sequence spans 483 residues: Glycogen synthase (483 aa).

Lys18 contacts ADP-alpha-D-glucose.

It belongs to the glycosyltransferase 1 family. Bacterial/plant glycogen synthase subfamily.

The catalysed reaction is [(1-&gt;4)-alpha-D-glucosyl](n) + ADP-alpha-D-glucose = [(1-&gt;4)-alpha-D-glucosyl](n+1) + ADP + H(+). It participates in glycan biosynthesis; glycogen biosynthesis. Synthesizes alpha-1,4-glucan chains using ADP-glucose. This chain is Glycogen synthase, found in Rhodopseudomonas palustris (strain ATCC BAA-98 / CGA009).